Reading from the N-terminus, the 21-residue chain is Trypsin (21 aa).

It belongs to the peptidase S1 family.

The protein resides in the secreted. It is found in the extracellular space. It catalyses the reaction Preferential cleavage: Arg-|-Xaa, Lys-|-Xaa.. The protein is Trypsin of Apis mellifera scutellata (Africanized honey bee).